Consider the following 23-residue polypeptide: Protein YqfH (23 aa).

In Escherichia coli (strain K12), this protein is Protein YqfH.